Consider the following 375-residue polypeptide: 23S rRNA (uracil(747)-C(5))-methyltransferase RlmC (375 aa).

4 residues coordinate [4Fe-4S] cluster: Cys3, Cys11, Cys14, and Cys87. Positions 212, 241, 262, and 307 each coordinate S-adenosyl-L-methionine. Cys334 (nucleophile) is an active-site residue.

This sequence belongs to the class I-like SAM-binding methyltransferase superfamily. RNA M5U methyltransferase family. RlmC subfamily.

The catalysed reaction is uridine(747) in 23S rRNA + S-adenosyl-L-methionine = 5-methyluridine(747) in 23S rRNA + S-adenosyl-L-homocysteine + H(+). Functionally, catalyzes the formation of 5-methyl-uridine at position 747 (m5U747) in 23S rRNA. The chain is 23S rRNA (uracil(747)-C(5))-methyltransferase RlmC from Escherichia coli O7:K1 (strain IAI39 / ExPEC).